Reading from the N-terminus, the 310-residue chain is Probable deoxyhypusine synthase (310 aa).

The Nucleophile role is filled by K280.

It belongs to the deoxyhypusine synthase family. The cofactor is NAD(+).

The catalysed reaction is [eIF5A protein]-L-lysine + spermidine = [eIF5A protein]-deoxyhypusine + propane-1,3-diamine. It participates in protein modification; eIF5A hypusination. Its function is as follows. Catalyzes the NAD-dependent oxidative cleavage of spermidine and the subsequent transfer of the butylamine moiety of spermidine to the epsilon-amino group of a specific lysine residue of the eIF-5A precursor protein to form the intermediate deoxyhypusine residue. The sequence is that of Probable deoxyhypusine synthase (dys) from Aeropyrum pernix (strain ATCC 700893 / DSM 11879 / JCM 9820 / NBRC 100138 / K1).